A 454-amino-acid chain; its full sequence is UDP-N-acetylmuramoyl-tripeptide--D-alanyl-D-alanine ligase (454 aa).

116 to 122 (GSVGKTT) contacts ATP.

This sequence belongs to the MurCDEF family. MurF subfamily.

It is found in the cytoplasm. The enzyme catalyses D-alanyl-D-alanine + UDP-N-acetyl-alpha-D-muramoyl-L-alanyl-gamma-D-glutamyl-meso-2,6-diaminopimelate + ATP = UDP-N-acetyl-alpha-D-muramoyl-L-alanyl-gamma-D-glutamyl-meso-2,6-diaminopimeloyl-D-alanyl-D-alanine + ADP + phosphate + H(+). It functions in the pathway cell wall biogenesis; peptidoglycan biosynthesis. Functionally, involved in cell wall formation. Catalyzes the final step in the synthesis of UDP-N-acetylmuramoyl-pentapeptide, the precursor of murein. The sequence is that of UDP-N-acetylmuramoyl-tripeptide--D-alanyl-D-alanine ligase from Synechocystis sp. (strain ATCC 27184 / PCC 6803 / Kazusa).